The sequence spans 150 residues: D-aminoacyl-tRNA deacylase (150 aa).

The short motif at Gly136 to Pro137 is the Gly-cisPro motif, important for rejection of L-amino acids element.

Belongs to the DTD family. In terms of assembly, homodimer.

It localises to the cytoplasm. The enzyme catalyses glycyl-tRNA(Ala) + H2O = tRNA(Ala) + glycine + H(+). It catalyses the reaction a D-aminoacyl-tRNA + H2O = a tRNA + a D-alpha-amino acid + H(+). An aminoacyl-tRNA editing enzyme that deacylates mischarged D-aminoacyl-tRNAs. Also deacylates mischarged glycyl-tRNA(Ala), protecting cells against glycine mischarging by AlaRS. Acts via tRNA-based rather than protein-based catalysis; rejects L-amino acids rather than detecting D-amino acids in the active site. By recycling D-aminoacyl-tRNA to D-amino acids and free tRNA molecules, this enzyme counteracts the toxicity associated with the formation of D-aminoacyl-tRNA entities in vivo and helps enforce protein L-homochirality. This chain is D-aminoacyl-tRNA deacylase, found in Staphylococcus carnosus (strain TM300).